We begin with the raw amino-acid sequence, 316 residues long: tRNA pseudouridine synthase B (316 aa).

Residue Asp47 is the Nucleophile of the active site.

Belongs to the pseudouridine synthase TruB family. Type 1 subfamily.

It catalyses the reaction uridine(55) in tRNA = pseudouridine(55) in tRNA. Functionally, responsible for synthesis of pseudouridine from uracil-55 in the psi GC loop of transfer RNAs. This chain is tRNA pseudouridine synthase B, found in Aliivibrio fischeri (strain ATCC 700601 / ES114) (Vibrio fischeri).